The chain runs to 720 residues: Polyribonucleotide nucleotidyltransferase (720 aa).

Residues D487 and D493 each contribute to the Mg(2+) site. The 60-residue stretch at 554–613 folds into the KH domain; it reads PRIETFKIPTDKIREVIGTGGKVIREIVEKTGAKVNIEDDGTVKVASSDGEAMKAAIKWI. Residues 623 to 691 form the S1 motif domain; that stretch reads GQIYDGTVVK…DRGKTRLSMK (69 aa). A disordered region spans residues 692–720; it reads AVDQTTGEDLEAKQKAEGGAEAPREAAGE. Residues 701-720 are compositionally biased toward basic and acidic residues; sequence LEAKQKAEGGAEAPREAAGE.

This sequence belongs to the polyribonucleotide nucleotidyltransferase family. It depends on Mg(2+) as a cofactor.

The protein localises to the cytoplasm. It catalyses the reaction RNA(n+1) + phosphate = RNA(n) + a ribonucleoside 5'-diphosphate. Its function is as follows. Involved in mRNA degradation. Catalyzes the phosphorolysis of single-stranded polyribonucleotides processively in the 3'- to 5'-direction. The protein is Polyribonucleotide nucleotidyltransferase of Bradyrhizobium sp. (strain BTAi1 / ATCC BAA-1182).